The following is a 556-amino-acid chain: Probable glucomannan 4-beta-mannosyltransferase 3 (556 aa).

A helical transmembrane segment spans residues 56–76 (IFVFIPILKCLVTICLVMSLL). Asp159 is a catalytic residue. Substrate-binding residues include Asp218 and Asp220. Asp312 is an active-site residue. 4 consecutive transmembrane segments (helical) span residues 391-411 (IVVHIFTFVFYCLILPTTVLF), 428-448 (ITILNAIATPRSLHLLVFWIL), 509-529 (LVVGLYIFFCGCYDFAYGGSY), and 530-550 (FYVYLFLQSCAFFVAGVGYIG).

Belongs to the glycosyltransferase 2 family. Plant cellulose synthase-like A subfamily.

It is found in the golgi apparatus membrane. It catalyses the reaction GDP-mannose + (glucomannan)n = GDP + (glucomannan)n+1.. Its function is as follows. Probable mannan synthase which consists of a 4-beta-mannosyltransferase activity on mannan using GDP-mannose. The beta-1,4-mannan product is the backbone for galactomannan synthesis by galactomannan galactosyltransferase. Galactomannan is a noncellulosic polysaccharides of plant cell wall. In Arabidopsis thaliana (Mouse-ear cress), this protein is Probable glucomannan 4-beta-mannosyltransferase 3.